The chain runs to 246 residues: Large ribosomal subunit protein uL4 (246 aa).

The tract at residues Ala37–Asn103 is disordered. A compositionally biased stretch (basic and acidic residues) spans Pro92–Asn103.

Belongs to the universal ribosomal protein uL4 family. In terms of assembly, part of the 50S ribosomal subunit. Interacts weakly with proteins L18e, L24 and L37e. Has been cross-linked to L18e.

In terms of biological role, one of the primary rRNA binding proteins, this protein initially binds near the 5'-end of the 23S rRNA. It is important during the early stages of 50S assembly. Its function is as follows. Makes multiple contacts with different domains of the 23S rRNA in the assembled 50S subunit. Forms part of the polypeptide exit tunnel, in which it helps forms a bend with protein L22. Contacts the macrolide antibiotic spiramycin in the polypeptide exit tunnel. This is Large ribosomal subunit protein uL4 (rpl4) from Haloarcula marismortui (strain ATCC 43049 / DSM 3752 / JCM 8966 / VKM B-1809) (Halobacterium marismortui).